We begin with the raw amino-acid sequence, 144 residues long: Protein NrdI (144 aa).

This sequence belongs to the NrdI family.

Functionally, probably involved in ribonucleotide reductase function. This Streptococcus pyogenes serotype M4 (strain MGAS10750) protein is Protein NrdI.